The primary structure comprises 131 residues: MIADRIIEHGTLITRDGRAAVEVRIPWYRALPGSCIAGAALTVDGVAAPEDTLRWTMNNRTFSFEELVDETGEWWFPLDSAVLSGDLPVWDDQAEHEVRVDLKLCIPYIITDHGVLHIEEHDTKTMKVAQQ.

The protein belongs to the C-glycoside deglycosidase beta subunit family. Heterodimer composed of an alpha subunit (CarB1) and a beta subunit (CarC1). Mg(2+) serves as cofactor.

It catalyses the reaction 3''-dehydroisovitexin = 1,5-anhydro-D-erythro-hex-1-en-3-ulose + apigenin. With respect to regulation, activity is strongly reduced in the presence of chelating agents. Functionally, carbon-carbon bond-cleaving enzyme which participates in the metabolism of C-glycosides. Acts on the C6-glycosylated compound 3''-dehydroisovitexin (3''-oxo-isovitexin). Shows weak activity with 3''-dehydroisoorientin (3''-oxo-homoorientin) and 3'-dehydromangiferin (3'-oxo-mangiferin). The protein is C-glycoside deglycosidase beta subunit of Arthrobacter globiformis (strain ATCC 8010 / DSM 20124 / JCM 1332 / NBRC 12137 / NCIMB 8907 / NRRL B-2979 / 168).